A 613-amino-acid polypeptide reads, in one-letter code: ADP-ribosylation factor-binding protein GGA2 (613 aa).

The VHS domain maps to 33–163 (ATDPSMSEQD…MLKKQGIIKQ (131 aa)). Positions 188-315 (DEEKSKLLTR…GVLLYKQVME (128 aa)) constitute a GAT domain. The interval 316–483 (GRVTFGNRVT…VFVPLESVKP (168 aa)) is unstructured hinge. Disordered regions lie at residues 389–414 (GQNCCEEKRNPSSSTLPGGGVQNPSA) and 435–466 (SQKSVPKEVPPGTKSSPGWSWEAGPLAPSPSS). A compositionally biased stretch (polar residues) spans 399–414 (PSSSTLPGGGVQNPSA). S400 carries the phosphoserine modification. Residues 484 to 605 (SSLPPLIVYD…SEVGEVKDFP (122 aa)) form the GAE domain.

Belongs to the GGA protein family. Monomer. Interacts with NECAP1, TSG101, UBC and AFTPH/aftiphilin. Interacts with CNST. Interacts with GGA1 and GGA3. Binds to clathrin and activated ARFs, such as ARF1, ARF5 and ARF6. Binds RABEP1 and RABGEF1. Interacts with the type-I membrane proteins LRP3, M6PR/CD-MPR, IGF2R/CI-MPR and BACE1. Interacts (via N-terminal VHS domain) with SORL1/sorLA and SORT1 (via C-terminal cytosolic domain). Binds the accessory proteins CCDC91, P200, SYNRG, EPN4 and NECAP2. Interacts with ADRA2B. Interacts (via VHS domain) with PIK4B; the interaction is important for PIK4B location at the Golgi apparatus membrane. Post-translationally, ubiquitinated. In terms of tissue distribution, ubiquitously expressed.

The protein resides in the golgi apparatus. The protein localises to the trans-Golgi network membrane. It is found in the endosome membrane. Its subcellular location is the early endosome membrane. In terms of biological role, plays a role in protein sorting and trafficking between the trans-Golgi network (TGN) and endosomes. Mediates the ARF-dependent recruitment of clathrin to the TGN and binds ubiquitinated proteins and membrane cargo molecules with a cytosolic acidic cluster-dileucine (DXXLL) motif. Mediates export of the GPCR receptor ADRA2B to the cell surface. Regulates retrograde transport of phosphorylated form of BACE1 from endosomes to the trans-Golgi network. The protein is ADP-ribosylation factor-binding protein GGA2 (GGA2) of Homo sapiens (Human).